A 624-amino-acid polypeptide reads, in one-letter code: Probable Xaa-Pro aminopeptidase P (624 aa).

Mn(2+) contacts are provided by Asp421, Asp432, Glu530, and Glu544.

Belongs to the peptidase M24B family. Mn(2+) serves as cofactor.

The catalysed reaction is Release of any N-terminal amino acid, including proline, that is linked to proline, even from a dipeptide or tripeptide.. Its function is as follows. Catalyzes the removal of a penultimate prolyl residue from the N-termini of peptides. In Arthroderma otae (strain ATCC MYA-4605 / CBS 113480) (Microsporum canis), this protein is Probable Xaa-Pro aminopeptidase P (AMPP).